A 278-amino-acid polypeptide reads, in one-letter code: Putative transcription factor kapC (278 aa).

The span at 1 to 10 (MQPALAPAPH) shows a compositional bias: pro residues. The segment at 1-121 (MQPALAPAPH…QNRAAQRAFR (121 aa)) is disordered. Positions 56 to 68 (PTATTSPRDQNNI) are enriched in polar residues. Residues 103–166 (PLSTSKRAAQ…EYVINLQSRL (64 aa)) enclose the bZIP domain. The segment at 104–127 (LSTSKRAAQNRAAQRAFRQRKESY) is basic motif. The span at 109–119 (RAAQNRAAQRA) shows a compositional bias: low complexity. The segment at 131-162 (LEEQVKEYEVMSQEYKALQAENYQLREYVINL) is leucine-zipper. The interval 173-278 (VPELPGNIDL…PPTHGLPMVS (106 aa)) is disordered. Low complexity predominate over residues 198–214 (PGQAGASAPPQGSPQSQ). The segment covering 215–226 (VSIANDDMNSLN) has biased composition (polar residues). A compositionally biased stretch (basic and acidic residues) spans 254-269 (GRGDETADPSETKTEP).

Belongs to the bZIP family.

It localises to the nucleus. In terms of biological role, putative transcription factor. In Emericella nidulans (strain FGSC A4 / ATCC 38163 / CBS 112.46 / NRRL 194 / M139) (Aspergillus nidulans), this protein is Putative transcription factor kapC (kapC).